Consider the following 434-residue polypeptide: Trigger factor (434 aa).

One can recognise a PPIase FKBP-type domain in the interval 161-246; that stretch reads EDRVTIDFTG…LKKVEERELP (86 aa).

This sequence belongs to the FKBP-type PPIase family. Tig subfamily.

It is found in the cytoplasm. The enzyme catalyses [protein]-peptidylproline (omega=180) = [protein]-peptidylproline (omega=0). Involved in protein export. Acts as a chaperone by maintaining the newly synthesized protein in an open conformation. Functions as a peptidyl-prolyl cis-trans isomerase. The sequence is that of Trigger factor from Pectobacterium carotovorum subsp. carotovorum (strain PC1).